A 479-amino-acid chain; its full sequence is ATP-dependent protease ATPase subunit HslU (479 aa).

Residues Ile-32, 74-79 (GVGKTE), Asp-290, Glu-355, and Arg-427 each bind ATP.

It belongs to the ClpX chaperone family. HslU subfamily. As to quaternary structure, a double ring-shaped homohexamer of HslV is capped on each side by a ring-shaped HslU homohexamer. The assembly of the HslU/HslV complex is dependent on binding of ATP.

Its subcellular location is the cytoplasm. In terms of biological role, ATPase subunit of a proteasome-like degradation complex; this subunit has chaperone activity. The binding of ATP and its subsequent hydrolysis by HslU are essential for unfolding of protein substrates subsequently hydrolyzed by HslV. HslU recognizes the N-terminal part of its protein substrates and unfolds these before they are guided to HslV for hydrolysis. This Leptospira interrogans serogroup Icterohaemorrhagiae serovar Lai (strain 56601) protein is ATP-dependent protease ATPase subunit HslU.